Reading from the N-terminus, the 92-residue chain is Large ribosomal subunit protein eL43z (92 aa).

Residues 39–60 form a C4-type zinc finger; it reads CEFCGKFAVKRKAVGIWGCKDC.

It belongs to the eukaryotic ribosomal protein eL43 family.

The protein is Large ribosomal subunit protein eL43z of Oryza sativa subsp. japonica (Rice).